The chain runs to 449 residues: Acetolactate synthase small subunit 1, chloroplastic (449 aa).

The N-terminal 30 residues, 1 to 30 (MEHIQTRTTLSQLSTLPSDKRLGAIRFKCL), are a transit peptide targeting the chloroplast. ACT domains are found at residues 31-98 (LVMK…DLSK) and 259-333 (TLSM…DITH).

This sequence belongs to the acetolactate synthase small subunit family. As to quaternary structure, the acetolactate synthase complex contains both large catalytic subunits and small regulatory subunits.

It is found in the plastid. Its subcellular location is the chloroplast. It functions in the pathway amino-acid biosynthesis; L-isoleucine biosynthesis; L-isoleucine from 2-oxobutanoate: step 1/4. Its pathway is amino-acid biosynthesis; L-valine biosynthesis; L-valine from pyruvate: step 1/4. In terms of biological role, regulatory subunit of acetohydroxy-acid synthase. Probably involved in feedback inhibition by branched-chain amino acids. Not involved in herbicide tolerance. The chain is Acetolactate synthase small subunit 1, chloroplastic from Nicotiana plumbaginifolia (Leadwort-leaved tobacco).